The chain runs to 328 residues: uncharacterized protein (328 aa).

To the C-terminal of para-aminobenzoate synthase component I.

This is an uncharacterized protein from Haemophilus influenzae (strain ATCC 51907 / DSM 11121 / KW20 / Rd).